The following is a 559-amino-acid chain: Cytochrome P450 86B1 (559 aa).

Residues 31-51 (FLLRDVQILELLIAIFVFVAI) form a helical membrane-spanning segment. Position 488 (Cys488) interacts with heme.

It belongs to the cytochrome P450 family. It depends on heme as a cofactor. Expressed in roots endodermis, anthers, stigmas, stomata of young pedicels of inflorescences, the placenta region of siliques, at the level of the hilum in matures seeds, at the junction of siliques to pedicels where abscission of floral parts takes place and in nectary glands.

The protein localises to the endoplasmic reticulum membrane. Involved in very long chain fatty acids (VLCFA) omega-hydroxylation. Required for the synthesis of saturated VLCFA alpha, omega-bifunctional suberin monomers. The chain is Cytochrome P450 86B1 (CYP86B1) from Arabidopsis thaliana (Mouse-ear cress).